The chain runs to 202 residues: Tetranectin (202 aa).

The N-terminal stretch at 1–21 (MGFWGTYLLFCLFSFLSQLTA) is a signal peptide. 3 cysteine pairs are disulfide-bonded: Cys71–Cys81, Cys98–Cys197, and Cys173–Cys189. A C-type lectin domain is found at 77 to 198 (VNLKCLLAFT…CRDQLPYICQ (122 aa)).

Homotrimer. In terms of tissue distribution, highest expression in lung, skeletal muscle and heart. Expressed in retina.

The protein localises to the secreted. Tetranectin binds to plasminogen and to isolated kringle 4. May be involved in the packaging of molecules destined for exocytosis. Plays a role in retinal function. The polypeptide is Tetranectin (Clec3b) (Mus musculus (Mouse)).